The sequence spans 77 residues: Conotoxin PnMKLT1-0122 (77 aa).

A signal peptide spans 1 to 22 (MKLTCMMIVAVLFLTAWTFATA). Positions 23–49 (EDPRNGLENLFSKAHHEMKNPEDSKLN) are excised as a propeptide. 3 disulfide bridges follow: Cys-52–Cys-67, Cys-59–Cys-71, and Cys-66–Cys-76.

The protein belongs to the conotoxin O1 superfamily. Expressed by the venom duct.

The protein resides in the secreted. The polypeptide is Conotoxin PnMKLT1-0122 (Conus pennaceus (Feathered cone)).